We begin with the raw amino-acid sequence, 407 residues long: Phosphopentomutase (407 aa).

Mn(2+) contacts are provided by aspartate 10, aspartate 306, histidine 311, aspartate 347, histidine 348, and histidine 359.

It belongs to the phosphopentomutase family. Mn(2+) serves as cofactor.

It localises to the cytoplasm. It carries out the reaction 2-deoxy-alpha-D-ribose 1-phosphate = 2-deoxy-D-ribose 5-phosphate. It catalyses the reaction alpha-D-ribose 1-phosphate = D-ribose 5-phosphate. Its pathway is carbohydrate degradation; 2-deoxy-D-ribose 1-phosphate degradation; D-glyceraldehyde 3-phosphate and acetaldehyde from 2-deoxy-alpha-D-ribose 1-phosphate: step 1/2. Functionally, isomerase that catalyzes the conversion of deoxy-ribose 1-phosphate (dRib-1-P) and ribose 1-phosphate (Rib-1-P) to deoxy-ribose 5-phosphate (dRib-5-P) and ribose 5-phosphate (Rib-5-P), respectively. This is Phosphopentomutase from Buchnera aphidicola subsp. Acyrthosiphon pisum (strain 5A).